Here is a 186-residue protein sequence, read N- to C-terminus: Orotate phosphoribosyltransferase (186 aa).

5-phospho-alpha-D-ribose 1-diphosphate contacts are provided by residues R93, K94, K97, H99, and 119 to 127; that span reads EDVTTTGGS. Residues T123 and R151 each contribute to the orotate site.

Belongs to the purine/pyrimidine phosphoribosyltransferase family. PyrE subfamily. As to quaternary structure, homodimer. It depends on Mg(2+) as a cofactor.

It carries out the reaction orotidine 5'-phosphate + diphosphate = orotate + 5-phospho-alpha-D-ribose 1-diphosphate. Its pathway is pyrimidine metabolism; UMP biosynthesis via de novo pathway; UMP from orotate: step 1/2. Catalyzes the transfer of a ribosyl phosphate group from 5-phosphoribose 1-diphosphate to orotate, leading to the formation of orotidine monophosphate (OMP). This chain is Orotate phosphoribosyltransferase, found in Pyrococcus horikoshii (strain ATCC 700860 / DSM 12428 / JCM 9974 / NBRC 100139 / OT-3).